A 419-amino-acid chain; its full sequence is Large ribosomal subunit protein uL4 (419 aa).

Position 2 is an N-acetylalanine (alanine 2). The residue at position 14 (lysine 14) is an N6-acetyllysine. Arginine 97 carries the omega-N-methylarginine modification. Position 106 is an N6-acetyllysine (lysine 106). Residue lysine 239 forms a Glycyl lysine isopeptide (Lys-Gly) (interchain with G-Cter in SUMO2) linkage. Lysine 259 is modified (N6-acetyllysine). A Phosphothreonine modification is found at threonine 266. Phosphoserine is present on residues serine 290 and serine 295. Citrulline is present on arginine 300. Lysine 327 participates in a covalent cross-link: Glycyl lysine isopeptide (Lys-Gly) (interchain with G-Cter in SUMO2). An N6-acetyllysine mark is found at lysine 333 and lysine 353. Lysine 364 bears the N6-acetyllysine; alternate mark. Lysine 364 is covalently cross-linked (Glycyl lysine isopeptide (Lys-Gly) (interchain with G-Cter in SUMO1); alternate). The segment covering 364–379 (KSEKVVPEKGTADKKP) has biased composition (basic and acidic residues). Positions 364–419 (KSEKVVPEKGTADKKPAVGKKGKKVDAKKQKPAGKKVVAKKPAEKKPTTEEKKPAA) are disordered. Serine 365 bears the Phosphoserine mark. Residues 393-402 (QKPAGKKVVA) are compositionally biased toward basic residues. The span at 404-419 (KPAEKKPTTEEKKPAA) shows a compositional bias: basic and acidic residues.

This sequence belongs to the universal ribosomal protein uL4 family. Component of the large ribosomal subunit. May bind IPO9 with low affinity. Interacts with RBM3. In terms of processing, citrullinated by PADI4.

It localises to the cytoplasm. Functionally, component of the large ribosomal subunit. The ribosome is a large ribonucleoprotein complex responsible for the synthesis of proteins in the cell. The chain is Large ribosomal subunit protein uL4 (Rpl4) from Mus musculus (Mouse).